We begin with the raw amino-acid sequence, 366 residues long: Galactoside alpha-(1,2)-fucosyltransferase 1 (366 aa).

Topologically, residues 1–8 (MWPLSHRH) are cytoplasmic. Residues 9–25 (LCLAFLLVCVLSAISFF) traverse the membrane as a helical; Signal-anchor for type II membrane protein segment. The Lumenal portion of the chain corresponds to 26–366 (LHIHQDSFPH…LSPLWTLAEP (341 aa)). N-linked (GlcNAc...) asparagine glycans are attached at residues asparagine 66, asparagine 302, and asparagine 328.

This sequence belongs to the glycosyltransferase 11 family.

The protein localises to the golgi apparatus. It localises to the golgi stack membrane. The enzyme catalyses a beta-D-galactosyl-(1-&gt;4)-N-acetyl-beta-D-glucosaminyl derivative + GDP-beta-L-fucose = an alpha-L-Fuc-(1-&gt;2)-beta-D-Gal-(1-&gt;4)-beta-D-GlcNAc derivative + GDP + H(+). It catalyses the reaction a ganglioside GA1 + GDP-beta-L-fucose = a ganglioside Fuc-GA1 + GDP + H(+). It carries out the reaction a beta-D-Gal-(1-&gt;3)-beta-D-GlcNAc-(1-&gt;3)-beta-D-Gal-(1-&gt;4)-beta-D-Glc-(1&lt;-&gt;1')-Cer(d18:1(4E)) + GDP-beta-L-fucose = alpha-L-fucosyl-(1-&gt;2)- beta-D-galactosyl-(1-&gt;3)-N-acetyl-beta-D-glucosaminyl-(1-&gt;3)-beta-D-galactosyl-(1-&gt;4)-beta-D-glucosyl-(1&lt;-&gt;1')-N-acylsphing-4-enine + GDP + H(+). The catalysed reaction is a neolactoside nLc4Cer(d18:1(4E)) + GDP-beta-L-fucose = a neolactoside IV(2)-alpha-Fuc-nLc4Cer(d18:1(4E)) + GDP + H(+). The enzyme catalyses a ganglioside GM1 + GDP-beta-L-fucose = a ganglioside Fuc-GM1 + GDP + H(+). It catalyses the reaction beta-D-galactosyl-(1-&gt;3)-N-acetyl-D-galactosamine + GDP-beta-L-fucose = alpha-L-fucosyl-(1-&gt;2)-beta-D-galactosyl-(1-&gt;3)-N-acetyl-D-galactosamine + GDP + H(+). It participates in protein modification; protein glycosylation. Functionally, catalyzes the transfer of L-fucose, from a guanosine diphosphate-beta-L-fucose, to the terminal galactose residue of glycoconjugates through an alpha(1,2) linkage leading to H antigen synthesis that is an intermediate substrate in the synthesis of ABO blood group antigens. H antigen is essential for maturation of the glomerular layer of the main olfactory bulb, in cell migration and early cell-cell contacts during tumor associated angiogenesis. Preferentially fucosylates soluble lactose and to a lesser extent fucosylates glycolipids gangliosides GA1 and GM1a. The sequence is that of Galactoside alpha-(1,2)-fucosyltransferase 1 from Lagothrix lagotricha (Brown woolly monkey).